Reading from the N-terminus, the 89-residue chain is Small ribosomal subunit protein uS15 (89 aa).

Belongs to the universal ribosomal protein uS15 family. In terms of assembly, part of the 30S ribosomal subunit. Forms a bridge to the 50S subunit in the 70S ribosome, contacting the 23S rRNA.

Its function is as follows. One of the primary rRNA binding proteins, it binds directly to 16S rRNA where it helps nucleate assembly of the platform of the 30S subunit by binding and bridging several RNA helices of the 16S rRNA. In terms of biological role, forms an intersubunit bridge (bridge B4) with the 23S rRNA of the 50S subunit in the ribosome. The polypeptide is Small ribosomal subunit protein uS15 (Staphylococcus aureus (strain JH1)).